Here is a 226-residue protein sequence, read N- to C-terminus: PKHD-type hydroxylase Sfri_0612 (226 aa).

In terms of domain architecture, Fe2OG dioxygenase spans 77-177 (KIFPPCFNRY…RIAAITWMQS (101 aa)). 3 residues coordinate Fe cation: histidine 95, aspartate 97, and histidine 158. Arginine 168 contributes to the 2-oxoglutarate binding site.

The cofactor is Fe(2+). L-ascorbate serves as cofactor.

The chain is PKHD-type hydroxylase Sfri_0612 from Shewanella frigidimarina (strain NCIMB 400).